Consider the following 354-residue polypeptide: MGRLLGVGLLGDRWRSWGERLLALRNRLKASREVESVDLPNCHLIKGIEAGADDIDILPNGLAFFSVGLKCPGLHSFSPDKPGGILMMDLKKENPRALELRISRGFNLASFNPHGISTFIDSDDTVYLFVVNHPEFKNTVEIFKFEEEENSLLHLKTIKHELLPSVNDIIAVGPAHFYATNDHYFSDPFLKYLETYLNLHWANVVYYSPDEVKVVAEGFDAANGINISPDKKYIYVADILAHEIHVLEKHPNMNLTQLKVLKLDTLVDNLSIDPSSGDILVGCHPNGQKLFIYDPNNPPSSEVLRIQNILCEKPTVTTVYANNGSVLQGSSVASVYDRKLLIGTLYHRALYCEL.

C42 and C352 are oxidised to a cystine. Ca(2+) is bound by residues D53 and D54. The active-site Proton acceptor is H114. The Ca(2+) site is built by I116, N167, D168, and N223. Residue N254 is glycosylated (N-linked (GlcNAc...) asparagine). 2 residues coordinate Ca(2+): D268 and N269. N269 and N323 each carry an N-linked (GlcNAc...) asparagine glycan.

The protein belongs to the paraoxonase family. Homotrimer. The cofactor is Ca(2+). Post-translationally, glycosylated. The signal sequence is not cleaved.

It is found in the membrane. The enzyme catalyses a phenyl acetate + H2O = a phenol + acetate + H(+). It carries out the reaction an N-acyl-L-homoserine lactone + H2O = an N-acyl-L-homoserine + H(+). Capable of hydrolyzing lactones and a number of aromatic carboxylic acid esters. The protein is Serum paraoxonase/arylesterase 2 (PON2) of Canis lupus familiaris (Dog).